The sequence spans 91 residues: UPF0386 protein Caul_4643 (91 aa).

Belongs to the UPF0386 family.

This chain is UPF0386 protein Caul_4643, found in Caulobacter sp. (strain K31).